The primary structure comprises 214 residues: Protein-L-isoaspartate O-methyltransferase (214 aa).

The active site involves serine 61.

This sequence belongs to the methyltransferase superfamily. L-isoaspartyl/D-aspartyl protein methyltransferase family.

Its subcellular location is the cytoplasm. It catalyses the reaction [protein]-L-isoaspartate + S-adenosyl-L-methionine = [protein]-L-isoaspartate alpha-methyl ester + S-adenosyl-L-homocysteine. Catalyzes the methyl esterification of L-isoaspartyl residues in peptides and proteins that result from spontaneous decomposition of normal L-aspartyl and L-asparaginyl residues. It plays a role in the repair and/or degradation of damaged proteins. This chain is Protein-L-isoaspartate O-methyltransferase, found in Paramagnetospirillum magneticum (strain ATCC 700264 / AMB-1) (Magnetospirillum magneticum).